The sequence spans 132 residues: uncharacterized protein (132 aa).

Transmembrane regions (helical) follow at residues 44–64 (FMSF…FTFI) and 75–95 (IAMI…AMLF).

The protein localises to the cytoplasm. Its subcellular location is the membrane. This is an uncharacterized protein from Schizosaccharomyces pombe (strain 972 / ATCC 24843) (Fission yeast).